The following is a 351-amino-acid chain: SKP1-like protein 21 (351 aa).

The tract at residues 108–167 (TSAADSLQLKPLVDLTSRALARIIEGKTPEEIREIFHLPDDLTEEEKLEPLKNTMDDPRI) is interaction with the F-box domain of F-box proteins. 2 disordered regions span residues 216–240 (VKTSKSKKKNKKRKEQKNGSSNGTC) and 330–351 (VNFSINGNGTSRRLTGPAAGHK). Over residues 217 to 230 (KTSKSKKKNKKRKE) the composition is skewed to basic residues. Over residues 330-342 (VNFSINGNGTSRR) the composition is skewed to polar residues.

This sequence belongs to the SKP1 family. As to quaternary structure, part of a SCF (SKP1-cullin-F-box) protein ligase complex. In terms of tissue distribution, expressed in young seedlings, roots, leaves, floral stems, inflorescences, and siliques.

It localises to the nucleus. The protein operates within protein modification; protein ubiquitination. In terms of biological role, involved in ubiquitination and subsequent proteasomal degradation of target proteins. Together with CUL1, RBX1 and a F-box protein, it forms a SCF E3 ubiquitin ligase complex. The functional specificity of this complex depends on the type of F-box protein. In the SCF complex, it serves as an adapter that links the F-box protein to CUL1. The chain is SKP1-like protein 21 (ASK21) from Arabidopsis thaliana (Mouse-ear cress).